Consider the following 186-residue polypeptide: Der GTPase-activating protein YihI (186 aa).

A disordered region spans residues 42–77; that stretch reads KAREDKKKRKHKGLASGSRHSAVEEKANKLQNEIKD. Residues 62-77 show a composition bias toward basic and acidic residues; it reads SAVEEKANKLQNEIKD.

The protein belongs to the YihI family. Interacts with Der.

Functionally, a GTPase-activating protein (GAP) that modifies Der/EngA GTPase function. May play a role in ribosome biogenesis. The protein is Der GTPase-activating protein YihI of Haemophilus influenzae (strain ATCC 51907 / DSM 11121 / KW20 / Rd).